The primary structure comprises 535 residues: Serine/threonine-protein kinase C (535 aa).

A Protein kinase domain is found at 12–277 (YRIIETLGRG…AMAQTLQGNF (266 aa)). ATP is bound by residues 18-26 (LGRGGFGET) and K43. D142 functions as the Proton acceptor in the catalytic mechanism. The disordered stretch occupies residues 371–535 (NNPPPAVEEP…GEKPIDPEQN (165 aa)). Pro residues predominate over residues 402-421 (SPIPTPATPSPEPTPSPSPS). Low complexity predominate over residues 422-435 (PETTSSPTEDTITP). Pro residues-rich tracts occupy residues 446 to 464 (APIP…PQPS) and 472 to 498 (TPAP…PTPQ).

Belongs to the protein kinase superfamily. Ser/Thr protein kinase family.

The catalysed reaction is L-seryl-[protein] + ATP = O-phospho-L-seryl-[protein] + ADP + H(+). It catalyses the reaction L-threonyl-[protein] + ATP = O-phospho-L-threonyl-[protein] + ADP + H(+). This chain is Serine/threonine-protein kinase C (spkC), found in Synechocystis sp. (strain ATCC 27184 / PCC 6803 / Kazusa).